Reading from the N-terminus, the 1263-residue chain is DNA polymerase II large subunit (1263 aa).

Residues 1224–1250 form a disordered region; sequence LENFNSSGNNGKKIEKKEKKAKEKPKK. Over residues 1235-1244 the composition is skewed to basic and acidic residues; it reads KKIEKKEKKA.

Belongs to the archaeal DNA polymerase II family. Heterodimer of a large subunit and a small subunit.

The catalysed reaction is DNA(n) + a 2'-deoxyribonucleoside 5'-triphosphate = DNA(n+1) + diphosphate. It carries out the reaction Exonucleolytic cleavage in the 3'- to 5'-direction to yield nucleoside 5'-phosphates.. Functionally, possesses two activities: a DNA synthesis (polymerase) and an exonucleolytic activity that degrades single-stranded DNA in the 3'- to 5'-direction. Has a template-primer preference which is characteristic of a replicative DNA polymerase. The sequence is that of DNA polymerase II large subunit (polC) from Pyrococcus furiosus (strain ATCC 43587 / DSM 3638 / JCM 8422 / Vc1).